The following is a 104-amino-acid chain: Cell division protein FtsB (104 aa).

Topologically, residues Met1–Lys3 are cytoplasmic. The chain crosses the membrane as a helical span at residues Leu4 to Leu21. The Periplasmic portion of the chain corresponds to Gly22–Gln104. Residues Asp33–Gly62 are a coiled coil.

The protein belongs to the FtsB family. In terms of assembly, part of a complex composed of FtsB, FtsL and FtsQ.

The protein resides in the cell inner membrane. In terms of biological role, essential cell division protein. May link together the upstream cell division proteins, which are predominantly cytoplasmic, with the downstream cell division proteins, which are predominantly periplasmic. In Erwinia tasmaniensis (strain DSM 17950 / CFBP 7177 / CIP 109463 / NCPPB 4357 / Et1/99), this protein is Cell division protein FtsB.